The following is a 487-amino-acid chain: GTPase Der (487 aa).

EngA-type G domains are found at residues 3–166 (PVVA…AEAM) and 199–372 (IKLA…DSAT). Residues 9–16 (GRPNVGKS), 56–60 (DTGGI), 118–121 (NKID), 205–212 (GKPNVGKS), 252–256 (DTAGV), and 317–320 (NKWD) each bind GTP. The KH-like domain occupies 373 to 457 (RRVSTSMLTR…PIQLRFQEGD (85 aa)).

Belongs to the TRAFAC class TrmE-Era-EngA-EngB-Septin-like GTPase superfamily. EngA (Der) GTPase family. In terms of assembly, associates with the 50S ribosomal subunit.

GTPase that plays an essential role in the late steps of ribosome biogenesis. The chain is GTPase Der from Shewanella oneidensis (strain ATCC 700550 / JCM 31522 / CIP 106686 / LMG 19005 / NCIMB 14063 / MR-1).